A 400-amino-acid polypeptide reads, in one-letter code: MLLEAELDCHRERPGAPGASALCTFSRTPEIPMCAGCDQHILDRFILKALDRHWHSKCLKCSDCHVPLAERCFSRGESVYCKDDFFKRFGTKCAACQLGIPPTQVVRRAQDFVYHLHCFACVVCKRQLATGDEFYLMEDSRLVCKADYETAKQREAEATAKRPRTTITAKQLETLKSAYNTSPKPARHVREQLSSETGLDMRVVQVWFQNRRAKEKRLKKDAGRQRWGQYFRNMKRSRGSSKSDKDSIQEGQDSDAEVSFTDEPSMADMGPANGLYSSLGEPAPALGRPVGGLGSFTLDHGGLTGPEQYRELRPGSPYGIPPSPAAPQSLPGPQPLLSSLVYPDTNLSLVPSGPPGGPPPMRVLAGNGPSSDLSTESSSGYPDFPASPASWLDEVDHAQF.

LIM zinc-binding domains are found at residues 34–84 (CAGC…CKDD) and 93–147 (CAAC…CKAD). Position 74 is a phosphoserine (Ser74). Residues 160–219 (AKRPRTTITAKQLETLKSAYNTSPKPARHVREQLSSETGLDMRVVQVWFQNRRAKEKRLK) constitute a DNA-binding region (homeobox). 2 disordered regions span residues 215-280 (EKRL…SSLG) and 297-400 (TLDH…HAQF). Phosphotyrosine is present on Tyr230. Phosphoserine is present on residues Ser237 and Ser241. 2 stretches are compositionally biased toward pro residues: residues 319 to 334 (GIPPSPAAPQSLPGPQ) and 352 to 361 (SGPPGGPPPM). A compositionally biased stretch (polar residues) spans 368–380 (GPSSDLSTESSSG).

In terms of assembly, interacts with POU1F1. At neuronal promoters, interacts with LDB1, in motor neurons LDB1 is displaced by ISL1 and a ternary complex is formed in which ISL1 contacts both LHX3 and LDB1; allosteric structural changes in the DNA binding domain of LHX3, induced by the ISL1-LHX3 interaction, may explain differences in sequence specificity of the different complexes. Interacts with LDB2. May interact with CITED2/MRG1. As to expression, mostly expressed in the pituitary anterior and intermediate lobes. It is also expressed in the pineal gland and transiently in the primordia of motor neurons including the spinal cord, pons and medulla oblongata.

It is found in the nucleus. Transcription factor. Recognizes and binds to the consensus sequence motif 5'-AATTAATTA-3' in the regulatory elements of target genes, such as glycoprotein hormones alpha chain CGA and visual system homeobox CHX10, positively modulating transcription; transcription can be co-activated by LDB2. Synergistically enhances transcription from the prolactin promoter in cooperation with POU1F1/Pit-1. Required for the establishment of the specialized cells of the pituitary gland and the nervous system. Involved in the development of interneurons and motor neurons in cooperation with LDB1 and ISL1. This Mus musculus (Mouse) protein is LIM/homeobox protein Lhx3 (Lhx3).